We begin with the raw amino-acid sequence, 92 residues long: Acyl-CoA-binding domain-containing protein 6 (92 aa).

The 86-residue stretch at 3–88 (LKEEFEEHAE…VKQLLEVAAS (86 aa)) folds into the ACB domain. An acyl-CoA contacts are provided by residues 30–34 (YGLYK), Lys52, Lys56, and Tyr75.

Belongs to the ACBP family. Interacts with PDLP8. Mostly expressed in seeds, stems, and siliques, and, to a lower extent, in leaves, flowers, and roots (at protein level). Highly expressed in root and shoot phloem companion cells.

It is found in the cytoplasm. It localises to the cell membrane. In terms of biological role, binds medium- and long-chain acyl-CoA esters with very high affinity. May function as an intracellular carrier of acyl-CoA esters. Confers resistance to cold and freezing. Interacts with phosphatidylcholine and derivatives, but not phosphatidic acid and lysophosphatidylcholine. May be involved in phospholipid metabolism. In Arabidopsis thaliana (Mouse-ear cress), this protein is Acyl-CoA-binding domain-containing protein 6 (ACBP6).